Reading from the N-terminus, the 495-residue chain is MLHTEGHALLRAVGQGKLRLARLLLEGGAYVNEGDAQGETALMAACRARYDDPQNKARMVRYLLEQGADPNIADRLGRTALMHACAGGGGAAVASLLLAHGADPSVRDHAGASALVHALDRGDRETLATLLDACKAKGTEVIIITTDTSPSGTKKTRQYLNSPPSPGVEDPAPAPPSPGVCTSPSEVQLQTAGGGRGLLSPRAQEEEEKRDVFEFPLPKSPDDPSPSEPLPKPPRHPPKPLKRLNSEPWGLVAPPQPVPPAEGRPGLERLAAEFNGLTLTGRPRLSRRHSTEGPEDPPPWAEKVTGGGPLSRRNTAPEAQESGLPSGLRQKLSRMESVELDTPGHFCPDSPESSRLSLERRRYSASPLTLPPAGSVSSPRQSQESLPGAVSPLSGRRRSPGLLERRGSGTLLLDHISQTRPGFLPPLNVSPHPPIPDIRPQPGGRAPSLPAPPHSGAPGSPRTKRKLVRRHSMQTEQIRLLGGFQSLGGPGEPGR.

4 ANK repeats span residues 4–33 (TEGHALLRAVGQGKLRLARLLLEGGAYVNE), 37–72 (QGETALMAACRARYDDPQNKARMVRYLLEQGADPNI), 76–106 (LGRTALMHACAGGGGAAVASLLLAHGADPSV), and 110–139 (AGASALVHALDRGDRETLATLLDACKAKGT). Glutamine 15 carries the N5-methylglutamine modification. 2 stretches are compositionally biased toward polar residues: residues 147–162 (DTSPSGTKKTRQYLNS) and 180–191 (VCTSPSEVQLQT). The disordered stretch occupies residues 147-495 (DTSPSGTKKT…SLGGPGEPGR (349 aa)). The span at 203 to 213 (AQEEEEKRDVF) shows a compositional bias: basic and acidic residues. The span at 223 to 232 (DPSPSEPLPK) shows a compositional bias: pro residues. Over residues 233 to 242 (PPRHPPKPLK) the composition is skewed to basic residues. Threonine 315 carries the post-translational modification Phosphothreonine. Polar residues predominate over residues 375-385 (SVSSPRQSQES). Residues 462–472 (RTKRKLVRRHS) show a composition bias toward basic residues. The segment covering 485-495 (QSLGGPGEPGR) has biased composition (gly residues).

Belongs to the ANKRD34 family. Post-translationally, methylated at Gln-15 by N6AMT1.

This Rattus norvegicus (Rat) protein is Ankyrin repeat domain-containing protein 34A (Ankrd34a).